The chain runs to 185 residues: Ribosome-recycling factor (185 aa).

This sequence belongs to the RRF family.

The protein localises to the cytoplasm. In terms of biological role, responsible for the release of ribosomes from messenger RNA at the termination of protein biosynthesis. May increase the efficiency of translation by recycling ribosomes from one round of translation to another. This is Ribosome-recycling factor from Lactococcus lactis subsp. lactis (strain IL1403) (Streptococcus lactis).